Here is a 177-residue protein sequence, read N- to C-terminus: Large ribosomal subunit protein uL6 (177 aa).

Belongs to the universal ribosomal protein uL6 family. Part of the 50S ribosomal subunit.

In terms of biological role, this protein binds to the 23S rRNA, and is important in its secondary structure. It is located near the subunit interface in the base of the L7/L12 stalk, and near the tRNA binding site of the peptidyltransferase center. This chain is Large ribosomal subunit protein uL6, found in Histophilus somni (strain 2336) (Haemophilus somnus).